Consider the following 624-residue polypeptide: Prickle planar cell polarity protein 3 (624 aa).

A compositionally biased stretch (basic residues) spans 1-12 (MFARGSRRRRSG). A disordered region spans residues 1-26 (MFARGSRRRRSGRAPPEAEDPARGQP). The region spanning 74–182 (SDFQRHSISD…TVRIFPVTIT (109 aa)) is the PET domain. 3 consecutive LIM zinc-binding domains span residues 184 to 249 (AICE…CLRP), 250 to 309 (RCQA…RHAE), and 310 to 373 (YCDG…SETT). The interval 371 to 617 (ETTAPGPGRR…SHPVMPRQTR (247 aa)) is disordered. Residues 383–409 (SAGTVTTPLTTSTASFSATEGTSETAS) are compositionally biased toward low complexity. Residues 447-458 (PEPPTESPGHPA) show a composition bias toward pro residues. Ser475 and Ser491 each carry phosphoserine. Residues 509–541 (SCHHHHHHRRRRQRHRRRGSHHHHHHPGRHGHH) show a composition bias toward basic residues. Residues 545 to 564 (LGSGSDSGSCSSSPSSPSSE) show a composition bias toward low complexity. Residues 587-601 (RTTQDTSTETFNSPA) are compositionally biased toward polar residues.

This sequence belongs to the prickle / espinas / testin family. As to quaternary structure, interacts with VANGL2 via its C-terminus. The VANGL2-dependent membrane recruitment of PRICKLE3 is a prerequisite for its polarization. Interacts with WTIP. WTIP is involved in the recruitment of PRICKLE3 to the basal body. Interacts with MT-ATP8, a component of the mitochondrial complex V. In terms of tissue distribution, widely expressed.

It is found in the cytoplasm. It localises to the cell membrane. The protein resides in the mitochondrion. Involved in the planar cell polarity (PCP) pathway that is essential for the polarization of epithelial cells during morphogenetic processes, including gastrulation and neurulation. PCP is maintained by two molecular modules, the global and the core modules, PRICKLE3 being part of the core module. Distinct complexes of the core module segregate to opposite sides of the cell, where they interact with the opposite complex in the neighboring cell at or near the adherents junctions. Involved in the organization of the basal body. Involved in cilia growth and positioning. Required for proper assembly, stability, and function of mitochondrial membrane ATP synthase (mitochondrial complex V). This chain is Prickle planar cell polarity protein 3, found in Mus musculus (Mouse).